We begin with the raw amino-acid sequence, 376 residues long: 2-hydroxypropyl-CoM lyase (376 aa).

3 residues coordinate Zn(2+): His218, Cys220, and Cys341.

The protein belongs to the vitamin-B12 independent methionine synthase family. As to quaternary structure, homohexamer. Component I of the aliphatic epoxide carboxylation complex together with components II, III and IV. It depends on Zn(2+) as a cofactor.

It catalyses the reaction (R)-2-hydroxypropyl-coenzyme M = (R)-1,2-epoxypropane + coenzyme M. The enzyme catalyses (S)-2-hydroxypropyl-coenzyme M = (S)-1,2-epoxypropane + coenzyme M. The protein operates within alkene metabolism; propylene degradation. With respect to regulation, inhibited by methylepoxypropane. Inhibited by the zinc chelator 4-(2-pyridylazo)resorcinol (PAR), in the presence of p- (hydroxymercuri)benzenesulfonic acid (PMPS), and by EDTA. Not inhibited by the coenzyme M analog 2-bromoethanesulfonate (BES). In terms of biological role, involved in aliphatic epoxide carboxylation. Catalyzes the addition of coenzyme M (CoM) to either R- or S-epoxypropane to form the thioether conjugate 2-hydroxypropyl-CoM. Catalyzes the reaction of CoM with R-epoxypropane at a rate approximately twice of that with S-epoxypropane. The CoM analogs 2-mercaptopropionate, 2-mercaptoethanol and cysteine substitute poorly for CoM as the thiol substrate. This Xanthobacter autotrophicus (strain ATCC BAA-1158 / Py2) protein is 2-hydroxypropyl-CoM lyase.